Here is a 46-residue protein sequence, read N- to C-terminus: MAERSLSGLTEEEAIAVHDQFKTTFSAFIILAAVAHVLVWVWKPWF.

The Cytoplasmic portion of the chain corresponds to 2–19 (AERSLSGLTEEEAIAVHD). A bacteriochlorophyll-binding residues include His-18 and His-36. The helical transmembrane segment at 20–42 (QFKTTFSAFIILAAVAHVLVWVW) threads the bilayer. The Periplasmic portion of the chain corresponds to 43 to 46 (KPWF).

It belongs to the antenna complex beta subunit family. As to quaternary structure, the core complex is formed by different alpha and beta chains, binding bacteriochlorophyll molecules, and arranged most probably in tetrameric structures disposed around the reaction center.

It localises to the cell inner membrane. Functionally, antenna complexes are light-harvesting systems, which transfer the excitation energy to the reaction centers. This is Light-harvesting protein B-800/850 beta 1 chain (B1) from Magnetospirillum molischianum (Rhodospirillum molischianum).